Reading from the N-terminus, the 246-residue chain is Putative outer membrane protein YiaT (246 aa).

The signal sequence occupies residues 1–21 (MLINRNIVALFALPFMASATA).

Belongs to the MipA/OmpV family.

The protein localises to the cell outer membrane. The protein is Putative outer membrane protein YiaT (yiaT) of Escherichia coli O157:H7.